A 108-amino-acid polypeptide reads, in one-letter code: Translation initiation factor 1A (108 aa).

The S1-like domain occupies 11 to 85 (PSRDVPRPEE…NRCDILYKYG (75 aa)).

It belongs to the eIF-1A family.

In terms of biological role, seems to be required for maximal rate of protein biosynthesis. Enhances ribosome dissociation into subunits and stabilizes the binding of the initiator Met-tRNA(I) to 40 S ribosomal subunits. This chain is Translation initiation factor 1A (eIF1A), found in Saccharolobus solfataricus (strain ATCC 35092 / DSM 1617 / JCM 11322 / P2) (Sulfolobus solfataricus).